The following is a 180-amino-acid chain: MKGGKRVQTARPNRINSEIRAQEVRLTGLEGEQLGIVSLREALEKAEEAGVDLVEISPNAEPPVCRIMDYGKFLYEKSKSSKEQKKKQKVIQVKEIKFRPGTDEGDYQVKLRSLIRFLEEGDKAKITLRFRGREMAHQQIGMEVLNRVKDDLQELAVVESFPTKIEGRQMIMVLAPKKKQ.

It belongs to the IF-3 family. As to quaternary structure, monomer.

It is found in the cytoplasm. Its function is as follows. IF-3 binds to the 30S ribosomal subunit and shifts the equilibrium between 70S ribosomes and their 50S and 30S subunits in favor of the free subunits, thus enhancing the availability of 30S subunits on which protein synthesis initiation begins. The protein is Translation initiation factor IF-3 of Salmonella typhimurium (strain LT2 / SGSC1412 / ATCC 700720).